The sequence spans 403 residues: Peptidyl-prolyl cis-trans isomerase FKBP8 (403 aa).

Residues 26–54 (VLDGVDDAEEEDDLSGLPPLEDMGQPTVE) are disordered. Residues 28–39 (DGVDDAEEEDDL) show a composition bias toward acidic residues. In terms of domain architecture, PPIase FKBP-type spans 110–195 (GQVVTVHLQM…CLEVTLKTAE (86 aa)). A TPR 1 repeat occupies 212–245 (ANRKRECGNAHYQRADFVLAANSYDLAIKAITSN). Residues K240, K262, K264, and K275 each participate in a glycyl lysine isopeptide (Lys-Gly) (interchain with G-Cter in ubiquitin) cross-link. TPR repeat units follow at residues 263-296 (VKCL…QPDN) and 297-330 (IKAL…EPSN). At S287 the chain carries Phosphoserine. Glycyl lysine isopeptide (Lys-Gly) (interchain with G-Cter in ubiquitin) cross-links involve residues K298, K305, K325, K331, K339, K342, and K343. A helical membrane pass occupies residues 381-401 (WLFGATAVALGGVALSVVIAA).

As to quaternary structure, homomultimers or heteromultimers (Potential). Forms heterodimer with calmodulin. When activated by calmodulin and calcium, interacts with the BH4 domain of BCL2 and weakly with BCLX isoform Bcl-X(L). Does not bind and inhibit calcineurin. Interacts with ZFYVE27; may negatively regulate ZFYVE27 phosphorylation. Ca(2+) is required as a cofactor. In terms of processing, ubiquitinated by PRKN during mitophagy, leading to its degradation and enhancement of mitophagy. Deubiquitinated by USP30.

It localises to the mitochondrion membrane. The enzyme catalyses [protein]-peptidylproline (omega=180) = [protein]-peptidylproline (omega=0). Constitutively inactive PPiase, which becomes active when bound to calmodulin and calcium. Seems to act as a chaperone for BCL2, targets it to the mitochondria and modulates its phosphorylation state. The BCL2/FKBP8/calmodulin/calcium complex probably interferes with the binding of BCL2 to its targets. The active form of FKBP8 may therefore play a role in the regulation of apoptosis. This is Peptidyl-prolyl cis-trans isomerase FKBP8 (Fkbp8) from Rattus norvegicus (Rat).